The chain runs to 269 residues: 4-hydroxy-tetrahydrodipicolinate reductase (269 aa).

NAD(+) is bound by residues 11–16 (GASGRM) and glutamate 37. Residue arginine 38 coordinates NADP(+). NAD(+)-binding positions include 101–103 (GTT) and 125–128 (AGNM). Histidine 158 serves as the catalytic Proton donor/acceptor. A (S)-2,3,4,5-tetrahydrodipicolinate-binding site is contributed by histidine 159. Residue lysine 162 is the Proton donor of the active site. 168–169 (GT) provides a ligand contact to (S)-2,3,4,5-tetrahydrodipicolinate.

It belongs to the DapB family.

It localises to the cytoplasm. It catalyses the reaction (S)-2,3,4,5-tetrahydrodipicolinate + NAD(+) + H2O = (2S,4S)-4-hydroxy-2,3,4,5-tetrahydrodipicolinate + NADH + H(+). The enzyme catalyses (S)-2,3,4,5-tetrahydrodipicolinate + NADP(+) + H2O = (2S,4S)-4-hydroxy-2,3,4,5-tetrahydrodipicolinate + NADPH + H(+). It participates in amino-acid biosynthesis; L-lysine biosynthesis via DAP pathway; (S)-tetrahydrodipicolinate from L-aspartate: step 4/4. Functionally, catalyzes the conversion of 4-hydroxy-tetrahydrodipicolinate (HTPA) to tetrahydrodipicolinate. The sequence is that of 4-hydroxy-tetrahydrodipicolinate reductase from Cereibacter sphaeroides (strain ATCC 17023 / DSM 158 / JCM 6121 / CCUG 31486 / LMG 2827 / NBRC 12203 / NCIMB 8253 / ATH 2.4.1.) (Rhodobacter sphaeroides).